The following is a 139-amino-acid chain: Nucleoside diphosphate kinase (139 aa).

ATP is bound by residues Lys-11, Phe-59, Arg-87, Thr-93, Arg-104, and Asn-114. The active-site Pros-phosphohistidine intermediate is His-117.

This sequence belongs to the NDK family. In terms of assembly, homotetramer. It depends on Mg(2+) as a cofactor.

Its subcellular location is the cytoplasm. It carries out the reaction a 2'-deoxyribonucleoside 5'-diphosphate + ATP = a 2'-deoxyribonucleoside 5'-triphosphate + ADP. The catalysed reaction is a ribonucleoside 5'-diphosphate + ATP = a ribonucleoside 5'-triphosphate + ADP. Its function is as follows. Major role in the synthesis of nucleoside triphosphates other than ATP. The ATP gamma phosphate is transferred to the NDP beta phosphate via a ping-pong mechanism, using a phosphorylated active-site intermediate. The polypeptide is Nucleoside diphosphate kinase (Flavobacterium psychrophilum (strain ATCC 49511 / DSM 21280 / CIP 103535 / JIP02/86)).